A 371-amino-acid chain; its full sequence is Solute carrier family 35 member F6 (371 aa).

A signal peptide spans 1–25 (MAWTKHQLFLAGLMLVTGSINTLSA). 2 consecutive transmembrane segments (helical) span residues 48–68 (FLQA…FYLL) and 89–109 (LLFL…YVAL). Positions 104–160 (LMYVALNMTSASSFQMLRGAVIIFTGLFSVAFLGRRLVLSQWLGILATIAGLVVVGL) constitute an EamA domain. A glycan (N-linked (GlcNAc...) asparagine) is linked at Asn110. Transmembrane regions (helical) follow at residues 117-137 (FQML…AFLG), 140-160 (LVLS…VVGL), 176-196 (VITG…QMVL), 216-236 (GLFG…IPAG), 261-281 (LIAV…FAGI), 295-312 (LDSL…ALGW), and 317-336 (ALQI…YNGL). The disordered stretch occupies residues 347–371 (GRPPAEESEQERLLGGSRTPINDAS). Residue Thr365 is modified to Phosphothreonine.

This sequence belongs to the SLC35F solute transporter family. In terms of assembly, interacts with SLC25A5.

It localises to the mitochondrion. The protein resides in the lysosome membrane. Its function is as follows. Involved in the maintenance of mitochondrial membrane potential in pancreatic ductal adenocarcinoma (PDAC) cells. Promotes pancreatic ductal adenocarcinoma (PDAC) cell growth. May play a role as a nucleotide-sugar transporter. The polypeptide is Solute carrier family 35 member F6 (SLC35F6) (Pongo abelii (Sumatran orangutan)).